Reading from the N-terminus, the 382-residue chain is D-galactonate dehydratase 1 (382 aa).

Asp183 is a binding site for Mg(2+). His185 acts as the Proton donor in catalysis. Positions 209 and 235 each coordinate Mg(2+). The Proton acceptor role is filled by His285.

Belongs to the mandelate racemase/muconate lactonizing enzyme family. GalD subfamily. Mg(2+) is required as a cofactor.

The enzyme catalyses D-galactonate = 2-dehydro-3-deoxy-D-galactonate + H2O. It functions in the pathway carbohydrate acid metabolism; D-galactonate degradation; D-glyceraldehyde 3-phosphate and pyruvate from D-galactonate: step 1/3. In terms of biological role, catalyzes the dehydration of D-galactonate to 2-keto-3-deoxy-D-galactonate. In Escherichia coli (strain SMS-3-5 / SECEC), this protein is D-galactonate dehydratase 1.